The primary structure comprises 375 residues: Actin, cytoplasmic (375 aa).

Belongs to the actin family.

The protein localises to the cytoplasm. It is found in the cytoskeleton. It catalyses the reaction ATP + H2O = ADP + phosphate + H(+). Its function is as follows. Actins are highly conserved proteins that are involved in various types of cell motility and are ubiquitously expressed in all eukaryotic cells. The sequence is that of Actin, cytoplasmic from Oxytricha trifallax (Sterkiella histriomuscorum).